Reading from the N-terminus, the 842-residue chain is Unconventional myosin-Ia (842 aa).

The 686-residue stretch at 1-686 (GVEDLILLEP…TLFYLEEQRR (686 aa)) folds into the Myosin motor domain. ATP is bound at residue 93–100 (GESGAGKT). The tract at residues 563–585 (VAILMKNLYSKNPNYIRCIKPND) is actin-binding. IQ domains follow at residues 689-712 (LQQLATLIQKVYRGWRCRTHYQQM), 713-733 (RKSQILLSAWFRGNKQKKHYG), and 735-764 (IRSSVLLIQAFVRGWKARKNYRKYFRSGAR).

It belongs to the TRAFAC class myosin-kinesin ATPase superfamily. Myosin family. In terms of processing, phosphorylated by ALPK1.

Functionally, involved in directing the movement of organelles along actin filaments. The chain is Unconventional myosin-Ia (Myo1a) from Rattus norvegicus (Rat).